A 295-amino-acid chain; its full sequence is Pyridoxal 5'-phosphate synthase subunit PdxS (295 aa).

Asp-25 contributes to the D-ribose 5-phosphate binding site. Lys-82 serves as the catalytic Schiff-base intermediate with D-ribose 5-phosphate. A D-ribose 5-phosphate-binding site is contributed by Gly-154. A D-glyceraldehyde 3-phosphate-binding site is contributed by Arg-166. D-ribose 5-phosphate contacts are provided by residues Gly-215 and 236–237; that span reads GS.

This sequence belongs to the PdxS/SNZ family. In the presence of PdxT, forms a dodecamer of heterodimers.

The enzyme catalyses aldehydo-D-ribose 5-phosphate + D-glyceraldehyde 3-phosphate + L-glutamine = pyridoxal 5'-phosphate + L-glutamate + phosphate + 3 H2O + H(+). Its pathway is cofactor biosynthesis; pyridoxal 5'-phosphate biosynthesis. Functionally, catalyzes the formation of pyridoxal 5'-phosphate from ribose 5-phosphate (RBP), glyceraldehyde 3-phosphate (G3P) and ammonia. The ammonia is provided by the PdxT subunit. Can also use ribulose 5-phosphate and dihydroxyacetone phosphate as substrates, resulting from enzyme-catalyzed isomerization of RBP and G3P, respectively. This Staphylococcus carnosus (strain TM300) protein is Pyridoxal 5'-phosphate synthase subunit PdxS.